A 198-amino-acid chain; its full sequence is Large ribosomal subunit protein bL25 (198 aa).

It belongs to the bacterial ribosomal protein bL25 family. CTC subfamily. As to quaternary structure, part of the 50S ribosomal subunit; part of the 5S rRNA/L5/L18/L25 subcomplex. Contacts the 5S rRNA. Binds to the 5S rRNA independently of L5 and L18.

Functionally, this is one of the proteins that binds to the 5S RNA in the ribosome where it forms part of the central protuberance. This is Large ribosomal subunit protein bL25 from Azotobacter vinelandii (strain DJ / ATCC BAA-1303).